Consider the following 72-residue polypeptide: Beta-defensin 104A (72 aa).

A signal peptide spans 1–22 (MRRLVLLLAISLLLYQDLPVRS). Cystine bridges form between C30-C57, C37-C51, and C41-C58.

This sequence belongs to the beta-defensin family.

The protein localises to the secreted. Its function is as follows. Has antimicrobial activity. This is Beta-defensin 104A (DEFB104A) from Pongo pygmaeus (Bornean orangutan).